The following is a 199-amino-acid chain: Elongation factor Ts (199 aa).

Residues 82-85 (TDFV) form an involved in Mg(2+) ion dislocation from EF-Tu region.

It belongs to the EF-Ts family.

It is found in the cytoplasm. Associates with the EF-Tu.GDP complex and induces the exchange of GDP to GTP. It remains bound to the aminoacyl-tRNA.EF-Tu.GTP complex up to the GTP hydrolysis stage on the ribosome. The chain is Elongation factor Ts from Leptospira borgpetersenii serovar Hardjo-bovis (strain JB197).